A 217-amino-acid polypeptide reads, in one-letter code: Phosphatase MT3486 (217 aa).

Asp-9 serves as the catalytic Nucleophile.

Belongs to the HAD-like hydrolase superfamily.

Its function is as follows. Able to hydrolyze geranyl diphosphate (GPP), farnesyl diphosphate (FPP) and geranylgeranyl diphosphate (GGPP) to respectively yield geraniol, farnesol and geranylgeraniol. This is Phosphatase MT3486 from Mycobacterium tuberculosis (strain CDC 1551 / Oshkosh).